The sequence spans 117 residues: uncharacterized protein (117 aa).

A helical membrane pass occupies residues 57-77 (LGFPLGLLVFLHSLIVARFFV).

It localises to the membrane. This is an uncharacterized protein from Schizosaccharomyces pombe (strain 972 / ATCC 24843) (Fission yeast).